We begin with the raw amino-acid sequence, 180 residues long: Ribonuclease M5 (180 aa).

Positions 5-90 constitute a Toprim domain; the sequence is KQIIIVEGKT…NAFIKKDDIS (86 aa). Mg(2+) is bound by residues Glu-11, Asp-59, and Asp-61.

Belongs to the ribonuclease M5 family. Requires Mg(2+) as cofactor.

The protein localises to the cytoplasm. It catalyses the reaction Endonucleolytic cleavage of RNA, removing 21 and 42 nucleotides, respectively, from the 5'- and 3'-termini of a 5S-rRNA precursor.. Required for correct processing of both the 5' and 3' ends of 5S rRNA precursor. Cleaves both sides of a double-stranded region yielding mature 5S rRNA in one step. The chain is Ribonuclease M5 from Mycoplasma capricolum subsp. capricolum (strain California kid / ATCC 27343 / NCTC 10154).